The primary structure comprises 927 residues: 2-oxoadipate dehydrogenase complex component E1 (927 aa).

The protein belongs to the alpha-ketoglutarate dehydrogenase family. As to quaternary structure, the 2-oxoadipate dehydrogenase complex is composed of OADH (2-oxoadipate dehydrogenase; E1a), DLST (dihydrolipoamide succinyltransferase; E2) and DLD (dihydrolipoamide dehydrogenase; E3). E1a functional unit is a dimer. Thiamine diphosphate is required as a cofactor.

It localises to the mitochondrion. The enzyme catalyses N(6)-[(R)-lipoyl]-L-lysyl-[protein] + 2-oxoadipate + H(+) = N(6)-[(R)-S(8)-glutaryldihydrolipoyl]-L-lysyl-[protein] + CO2. Its pathway is amino-acid degradation. 2-oxoadipate dehydrogenase (E1a) component of the 2-oxoadipate dehydrogenase complex (OADHC). Participates in the first step, rate limiting for the overall conversion of 2-oxoadipate (alpha-ketoadipate) to glutaryl-CoA and CO(2) catalyzed by the whole OADHC. Catalyzes the irreversible decarboxylation of 2-oxoadipate via the thiamine diphosphate (ThDP) cofactor and subsequent transfer of the decarboxylated acyl intermediate on an oxidized dihydrolipoyl group that is covalently amidated to the E2 enzyme (dihydrolipoyllysine-residue succinyltransferase or DLST). Can catalyze the decarboxylation of 2-oxoglutarate in vitro, but at a much lower rate than 2-oxoadipate. Responsible for the last step of L-lysine, L-hydroxylysine and L-tryptophan catabolism with the common product being 2-oxoadipate. The protein is 2-oxoadipate dehydrogenase complex component E1 (dhtkd1) of Xenopus laevis (African clawed frog).